A 363-amino-acid chain; its full sequence is 3-isopropylmalate dehydrogenase (363 aa).

78 to 91 (GKRWDHLPINERPE) provides a ligand contact to NAD(+). Substrate-binding residues include Arg-99, Arg-109, Arg-138, and Asp-227. The Mg(2+) site is built by Asp-227, Asp-251, and Asp-255. 285 to 297 (GSAPDIAGKNTAN) lines the NAD(+) pocket.

The protein belongs to the isocitrate and isopropylmalate dehydrogenases family. LeuB type 1 subfamily. In terms of assembly, homodimer. The cofactor is Mg(2+). Mn(2+) is required as a cofactor.

It is found in the cytoplasm. It catalyses the reaction (2R,3S)-3-isopropylmalate + NAD(+) = 4-methyl-2-oxopentanoate + CO2 + NADH. It participates in amino-acid biosynthesis; L-leucine biosynthesis; L-leucine from 3-methyl-2-oxobutanoate: step 3/4. Functionally, catalyzes the oxidation of 3-carboxy-2-hydroxy-4-methylpentanoate (3-isopropylmalate) to 3-carboxy-4-methyl-2-oxopentanoate. The product decarboxylates to 4-methyl-2 oxopentanoate. This Buchnera aphidicola subsp. Uroleucon helianthicola protein is 3-isopropylmalate dehydrogenase.